Consider the following 128-residue polypeptide: Sulfurtransferase TusD (128 aa).

The Cysteine persulfide intermediate role is filled by C78.

It belongs to the DsrE/TusD family. Heterohexamer, formed by a dimer of trimers. The hexameric TusBCD complex contains 2 copies each of TusB, TusC and TusD. The TusBCD complex interacts with TusE.

Its subcellular location is the cytoplasm. In terms of biological role, part of a sulfur-relay system required for 2-thiolation of 5-methylaminomethyl-2-thiouridine (mnm(5)s(2)U) at tRNA wobble positions. Accepts sulfur from TusA and transfers it in turn to TusE. This chain is Sulfurtransferase TusD, found in Buchnera aphidicola subsp. Schizaphis graminum (strain Sg).